Consider the following 642-residue polypeptide: Threonine--tRNA ligase (642 aa).

In terms of domain architecture, TGS spans Met-1–Thr-61. The segment at Asp-243–Pro-534 is catalytic. 3 residues coordinate Zn(2+): Cys-334, His-385, and His-511.

The protein belongs to the class-II aminoacyl-tRNA synthetase family. In terms of assembly, homodimer. The cofactor is Zn(2+).

It localises to the cytoplasm. The enzyme catalyses tRNA(Thr) + L-threonine + ATP = L-threonyl-tRNA(Thr) + AMP + diphosphate + H(+). Its function is as follows. Catalyzes the attachment of threonine to tRNA(Thr) in a two-step reaction: L-threonine is first activated by ATP to form Thr-AMP and then transferred to the acceptor end of tRNA(Thr). Also edits incorrectly charged L-seryl-tRNA(Thr). The polypeptide is Threonine--tRNA ligase (Shewanella denitrificans (strain OS217 / ATCC BAA-1090 / DSM 15013)).